A 369-amino-acid polypeptide reads, in one-letter code: Replication factor C subunit 5 (369 aa).

Positions 21–40 are disordered; the sequence is INKGKDVVGFGPPPQSKATP. Residue 79-86 participates in ATP binding; the sequence is GPPGTGKT.

The protein belongs to the activator 1 small subunits family. As to quaternary structure, heterotetramer of subunits RFC2, RFC3, RFC4 and RFC5 that can form a complex with RFC1.

Its subcellular location is the nucleus. In terms of biological role, functions in cell replication and proliferation. May be involved in chromatin assembly and remodeling. Plays a role in the negative control of pathogenesis-related gene expression and systemic acquired resistance (SAR). This chain is Replication factor C subunit 5 (RFC5), found in Arabidopsis thaliana (Mouse-ear cress).